Consider the following 169-residue polypeptide: Cytochrome c oxidase subunit 4 isoform 1, mitochondrial (169 aa).

A mitochondrion-targeting transit peptide spans 1-22 (MLATRALSLIGKRAISTSVCLR). Over 23–98 (AHGSVVKSED…SFAEMNKGTN (76 aa)) the chain is Mitochondrial matrix. N6-acetyllysine; alternate is present on Lys-29. Lys-29 is subject to N6-succinyllysine; alternate. An N6-acetyllysine modification is found at Lys-53. A phosphoserine mark is found at Ser-56 and Ser-58. At Lys-60 the chain carries N6-acetyllysine; alternate. Residue Lys-60 is modified to N6-succinyllysine; alternate. Lys-67 carries the N6-acetyllysine modification. A helical membrane pass occupies residues 99–124 (EWKTVVGLAMFFIGFTALVLIWEKSY). The Mitochondrial intermembrane portion of the chain corresponds to 125–169 (VYGPIPHTFDRDWVAMQTKRMLDMKVNPIQGFSAKWDYNKNEWKK).

Belongs to the cytochrome c oxidase IV family. In terms of assembly, component of the cytochrome c oxidase (complex IV, CIV), a multisubunit enzyme composed of 14 subunits. The complex is composed of a catalytic core of 3 subunits MT-CO1, MT-CO2 and MT-CO3, encoded in the mitochondrial DNA, and 11 supernumerary subunits COX4I, COX5A, COX5B, COX6A, COX6B, COX6C, COX7A, COX7B, COX7C, COX8 and NDUFA4, which are encoded in the nuclear genome. The complex exists as a monomer or a dimer and forms supercomplexes (SCs) in the inner mitochondrial membrane with NADH-ubiquinone oxidoreductase (complex I, CI) and ubiquinol-cytochrome c oxidoreductase (cytochrome b-c1 complex, complex III, CIII), resulting in different assemblies (supercomplex SCI(1)III(2)IV(1) and megacomplex MCI(2)III(2)IV(2)). Interacts with PHB2; the interaction decreases in absence of SPHK2. Interacts with AFG1L. Interacts with ABCB7; this interaction allows the regulation of cellular iron homeostasis and cellular reactive oxygen species (ROS) levels in cardiomyocytes. Interacts with FLVCR2; this interaction occurs in the absence of heme and is disrupted upon heme binding. Interacts with IRGC.

The protein localises to the mitochondrion inner membrane. It functions in the pathway energy metabolism; oxidative phosphorylation. Its function is as follows. Component of the cytochrome c oxidase, the last enzyme in the mitochondrial electron transport chain which drives oxidative phosphorylation. The respiratory chain contains 3 multisubunit complexes succinate dehydrogenase (complex II, CII), ubiquinol-cytochrome c oxidoreductase (cytochrome b-c1 complex, complex III, CIII) and cytochrome c oxidase (complex IV, CIV), that cooperate to transfer electrons derived from NADH and succinate to molecular oxygen, creating an electrochemical gradient over the inner membrane that drives transmembrane transport and the ATP synthase. Cytochrome c oxidase is the component of the respiratory chain that catalyzes the reduction of oxygen to water. Electrons originating from reduced cytochrome c in the intermembrane space (IMS) are transferred via the dinuclear copper A center (CU(A)) of subunit 2 and heme A of subunit 1 to the active site in subunit 1, a binuclear center (BNC) formed by heme A3 and copper B (CU(B)). The BNC reduces molecular oxygen to 2 water molecules using 4 electrons from cytochrome c in the IMS and 4 protons from the mitochondrial matrix. The chain is Cytochrome c oxidase subunit 4 isoform 1, mitochondrial (Cox4i1) from Rattus norvegicus (Rat).